We begin with the raw amino-acid sequence, 156 residues long: Ubiquitin-like protein 4A (156 aa).

In terms of domain architecture, Ubiquitin-like spans 1-76 (MILTVKPLQG…LNLVIRPVGE (76 aa)).

Component of the bag6/bat3 complex.

It localises to the cytoplasm. Its subcellular location is the cytosol. The protein localises to the nucleus. As part of a cytosolic protein quality control complex, the bag6/bat3 complex, maintains misfolded and hydrophobic patches-containing proteins in a soluble state and participates in their proper delivery to the endoplasmic reticulum or alternatively can promote their sorting to the proteasome where they undergo degradation. The bag6/bat3 complex is involved in the post-translational delivery of tail-anchored/type II transmembrane proteins to the endoplasmic reticulum membrane. Similarly, the bag6/bat3 complex also functions as a sorting platform for proteins of the secretory pathway that are mislocalized to the cytosol either delivering them to the proteasome for degradation or to the endoplasmic reticulum. The bag6/bat3 complex also plays a role in the endoplasmic reticulum-associated degradation (ERAD), a quality control mechanism that eliminates unwanted proteins of the endoplasmic reticulum through their retrotranslocation to the cytosol and their targeting to the proteasome. It maintains these retrotranslocated proteins in an unfolded yet soluble state condition in the cytosol to ensure their proper delivery to the proteasome. This Anoplopoma fimbria (Sablefish) protein is Ubiquitin-like protein 4A (ubl4a).